Here is a 352-residue protein sequence, read N- to C-terminus: Chymopapain (352 aa).

An N-terminal signal peptide occupies residues Met-1 to Ile-18. A propeptide spans Ile-19–Asn-134 (activation peptide). Asn-86 carries an N-linked (GlcNAc...) asparagine glycan. Cystine bridges form between Cys-156/Cys-197, Cys-190/Cys-229, and Cys-287/Cys-338. Residue Cys-159 is part of the active site. Active-site residues include His-293 and Asn-313.

It belongs to the peptidase C1 family.

It catalyses the reaction Specificity similar to that of papain.. Its function is as follows. Cysteine proteinase with a high level of diversity in substrate specificity. This is Chymopapain from Carica papaya (Papaya).